The primary structure comprises 134 residues: Peptide methionine sulfoxide reductase MsrB (134 aa).

One can recognise a MsrB domain in the interval 9 to 131 (DEYWRDKLDA…NSASIQLQKE (123 aa)). Zn(2+) is bound by residues Cys-48, Cys-51, Cys-97, and Cys-100. The active-site Nucleophile is Cys-120.

This sequence belongs to the MsrB Met sulfoxide reductase family. Zn(2+) is required as a cofactor.

The catalysed reaction is L-methionyl-[protein] + [thioredoxin]-disulfide + H2O = L-methionyl-(R)-S-oxide-[protein] + [thioredoxin]-dithiol. This chain is Peptide methionine sulfoxide reductase MsrB, found in Saccharophagus degradans (strain 2-40 / ATCC 43961 / DSM 17024).